The chain runs to 88 residues: Gene 86 protein (88 aa).

Residues 64–88 (WRGNPSAYDDEVGDLEGFETQHSDY) are disordered. A compositionally biased stretch (acidic residues) spans 71–80 (YDDEVGDLEG).

The sequence is that of Gene 86 protein (86) from Mycobacterium (Mycobacteriophage L5).